The sequence spans 396 residues: Cytochrome b (396 aa).

The next 4 membrane-spanning stretches (helical) occupy residues 37–57 (FGSL…ILAM), 81–102 (WLMR…YAHI), 117–137 (WNVG…GYVL), and 182–202 (FFTF…IHIM). 2 residues coordinate heme b: histidine 87 and histidine 101. The heme b site is built by histidine 186 and histidine 200. Histidine 205 contacts a ubiquinone. 4 helical membrane-spanning segments follow: residues 230 to 250 (FKDI…SLLP), 292 to 312 (LGGV…PFTH), 324 to 344 (LAQV…WLGG), and 351 to 371 (FILM…LIFP).

It belongs to the cytochrome b family. As to quaternary structure, the cytochrome bc1 complex contains 3 respiratory subunits (MT-CYB, CYC1 and UQCRFS1), 2 core proteins (UQCRC1 and UQCRC2) and probably 6 low-molecular weight proteins. Heme b serves as cofactor.

Its subcellular location is the mitochondrion inner membrane. Its function is as follows. Component of the ubiquinol-cytochrome c reductase complex (complex III or cytochrome b-c1 complex) that is part of the mitochondrial respiratory chain. The b-c1 complex mediates electron transfer from ubiquinol to cytochrome c. Contributes to the generation of a proton gradient across the mitochondrial membrane that is then used for ATP synthesis. This chain is Cytochrome b (mt-cyb), found in Lampetra fluviatilis (European river lamprey).